A 298-amino-acid chain; its full sequence is MATH domain and coiled-coil domain-containing protein At3g58280 (298 aa).

The MATH domain maps to 9 to 128; it reads KKTFGWVIKD…NGEITIIAEV (120 aa). Positions 240 to 288 form a coiled coil; that stretch reads NLDWLRQKFDQALEKQIAYDTRIGELEKQVKKRKLAVTELEADLEKEKA.

The polypeptide is MATH domain and coiled-coil domain-containing protein At3g58280 (Arabidopsis thaliana (Mouse-ear cress)).